The sequence spans 58 residues: uncharacterized protein (58 aa).

It localises to the plastid. The protein localises to the chloroplast. This is an uncharacterized protein from Pyropia yezoensis (Susabi-nori).